We begin with the raw amino-acid sequence, 785 residues long: Phenylalanine--tRNA ligase beta subunit (785 aa).

In terms of domain architecture, tRNA-binding spans 39 to 147 (FPIPRGVVFA…DALPPGTPLS (109 aa)). The B5 domain occupies 399 to 474 (KPPEAIPFRP…RIQGYETIPL (76 aa)). D452, D458, E461, and E462 together coordinate Mg(2+). The region spanning 688–780 (SRHPAAFRDL…ALRARGFGLR (93 aa)) is the FDX-ACB domain.

This sequence belongs to the phenylalanyl-tRNA synthetase beta subunit family. Type 1 subfamily. In terms of assembly, tetramer of two alpha and two beta subunits. The cofactor is Mg(2+).

It is found in the cytoplasm. It catalyses the reaction tRNA(Phe) + L-phenylalanine + ATP = L-phenylalanyl-tRNA(Phe) + AMP + diphosphate + H(+). The protein is Phenylalanine--tRNA ligase beta subunit (pheT) of Thermus thermophilus (strain ATCC 27634 / DSM 579 / HB8).